The chain runs to 311 residues: tRNA-cytidine(32) 2-sulfurtransferase (311 aa).

The short motif at 47 to 52 (SGGKDS) is the PP-loop motif element. Residues Cys-122, Cys-125, and Cys-213 each coordinate [4Fe-4S] cluster.

This sequence belongs to the TtcA family. As to quaternary structure, homodimer. It depends on Mg(2+) as a cofactor. [4Fe-4S] cluster serves as cofactor.

Its subcellular location is the cytoplasm. It catalyses the reaction cytidine(32) in tRNA + S-sulfanyl-L-cysteinyl-[cysteine desulfurase] + AH2 + ATP = 2-thiocytidine(32) in tRNA + L-cysteinyl-[cysteine desulfurase] + A + AMP + diphosphate + H(+). Its pathway is tRNA modification. Catalyzes the ATP-dependent 2-thiolation of cytidine in position 32 of tRNA, to form 2-thiocytidine (s(2)C32). The sulfur atoms are provided by the cysteine/cysteine desulfurase (IscS) system. The chain is tRNA-cytidine(32) 2-sulfurtransferase from Salmonella typhimurium (strain LT2 / SGSC1412 / ATCC 700720).